An 881-amino-acid polypeptide reads, in one-letter code: MRGSALLDLILFLLVSPLAHSFKGSEISKFYDKSISNQISQSDRESGYVLVSTVDGSISLVDMSSQKLDWTFHTNEPIYSSYQAPHYHYTTDEERSSVLGDDFYMDCDKDWRLYNSSVRKGKRVNEIVDASEFIGTLPYTSTDRIVLGKKDTSVFLLDWKTGKLVKRYRMDELYSNTVVENDKEKAIVLSKEAPLLFGSGFKKSEDFPELVYIERKDFKIQCISKFGDVLWSVSYAKMEAKLQNHESVQFISGLSSSVGKNQFPLSYTTSVPMVQLRNVKYETLFPRLGFLDEALYLPFQDRKPNQLAIGDGNQLTLPGNKEAEEVLSLPLPETVISQITDIIDGSTKQAGFASKFSGLIVLIFGFCVTMLSVCGLFFYRLRQSIRIKEPYVSEVPIATPKKKKSKKNGTTKAVHKKENGFISGGNKDPSHEENEKRLLTAFPGLNNSSAEGYRVGKLFVSNKEIAKGSNGTVVLEGSYEGRLVAVKRLVQSHHDVAQKEILNLMASDKHSNIVRWYGVDQDEHFIYISLELCACSLNDLIYASSALLESPMASSSIHSIQINPIFENGKGVELWKENGHPSPVLLKLMRDIVAGLVHLHDIGIVHRDLKPQNVLIVKNSSLCAKLSDMGISKRLPADTSALTRNSTGLGSGSSGWQAPEQLRNERQTRAVDLFSLGCVLFFCMTGGKHPYGDNYERDVNVLNDQKDLFLIESLPEAVHLLTGLLNPDPNLRPRAQDVMHHPLFWNSDMRLSFLRDASDRVELENREEGSQLLAALESTAAVTLNGRWDEKLDSIFLDNIGRYRRYKFDSIRDLLRVIRNKLNHYRELPKELQELLGSVPEGFERYFSSRFPKLLIQVYTVLFDYCNNEEFFFKYSKTTVF.

Positions 1–21 (MRGSALLDLILFLLVSPLAHS) are cleaved as a signal peptide. Residues 22 to 357 (FKGSEISKFY…KQAGFASKFS (336 aa)) are Lumenal-facing. Asn115 is a glycosylation site (N-linked (GlcNAc...) asparagine). Residues 358 to 378 (GLIVLIFGFCVTMLSVCGLFF) traverse the membrane as a helical segment. The Cytoplasmic segment spans residues 379–881 (YRLRQSIRIK…FFKYSKTTVF (503 aa)). The 286-residue stretch at 459-744 (FVSNKEIAKG…AQDVMHHPLF (286 aa)) folds into the Protein kinase domain. Residues 465–473 (IAKGSNGTV) and Lys487 contribute to the ATP site. The segment at 481 to 502 (GRLVAVKRLVQSHHDVAQKEIL) is ATP selon article. The Proton acceptor role is filled by Asp608. The segment at 642–661 (LTRNSTGLGSGSSGWQAPEQ) is disordered. The region spanning 747–878 (SDMRLSFLRD…EEFFFKYSKT (132 aa)) is the KEN domain.

Belongs to the protein kinase superfamily. Ser/Thr protein kinase family. Homodimer; disulfide-linked. Dimer formation is driven by hydrophobic interactions within the N-terminal luminal domains and stabilized by disulfide bridges. Mg(2+) is required as a cofactor. Autophosphorylated. As to expression, ubiquitous. Detected in the apical meristem, at leaf margins where vascular bundles end, in the anthers before pollen is formed and in the ovules at a very early stage of development. There is no expression in more mature embryos. Also strongly expressed in the cotyledons immediately after germination but not later on.

Its subcellular location is the endoplasmic reticulum membrane. The enzyme catalyses L-seryl-[protein] + ATP = O-phospho-L-seryl-[protein] + ADP + H(+). It carries out the reaction L-threonyl-[protein] + ATP = O-phospho-L-threonyl-[protein] + ADP + H(+). With respect to regulation, the kinase domain is activated by trans-autophosphorylation. Kinase activity is required for activation of the endoribonuclease domain. Senses unfolded proteins in the lumen of the endoplasmic reticulum via its N-terminal domain which leads to enzyme auto-activation. The active endoribonuclease domain splices bZIP60 mRNA to generate a new C-terminus, converting it into a potent unfolded-protein response transcriptional activator which then induces transcription of UPR target genes. Involved in organ growth regulation. Plays a role in plant immunity and abiotic stress responses. Required for ER stress-induced autophagy. This is Serine/threonine-protein kinase/endoribonuclease IRE1b (IRE1B) from Arabidopsis thaliana (Mouse-ear cress).